The sequence spans 477 residues: Glutamate--tRNA ligase 1 (477 aa).

The short motif at 12–22 (PSPTGALHLGN) is the 'HIGH' region element. Positions 253–257 (PLSKR) match the 'KMSKS' region motif. K256 contacts ATP.

The protein belongs to the class-I aminoacyl-tRNA synthetase family. Glutamate--tRNA ligase type 1 subfamily. Monomer.

Its subcellular location is the cytoplasm. It carries out the reaction tRNA(Glu) + L-glutamate + ATP = L-glutamyl-tRNA(Glu) + AMP + diphosphate. Catalyzes the attachment of glutamate to tRNA(Glu) in a two-step reaction: glutamate is first activated by ATP to form Glu-AMP and then transferred to the acceptor end of tRNA(Glu). The protein is Glutamate--tRNA ligase 1 of Halorhodospira halophila (strain DSM 244 / SL1) (Ectothiorhodospira halophila (strain DSM 244 / SL1)).